Reading from the N-terminus, the 298-residue chain is Mimecan (298 aa).

Positions 1 to 20 are cleaved as a signal peptide; sequence MKTLQSTLLLLLFVPLIKPA. N-linked (GlcNAc...) (keratan sulfate) asparagine glycosylation is present at N88. 7 LRR repeats span residues 112-131, 132-155, 156-179, 180-199, 200-225, 226-246, and 247-277; these read DAVP…FNKI, KKLT…GNLI, EDIE…ENQL, LKLP…YNKI, KSRG…HNAL, ESVP…FNNI, and ASIT…GNPI. N214 carries N-linked (GlcNAc...) (keratan sulfate) asparagine glycosylation. C255 and C288 are joined by a disulfide. Residue N258 is glycosylated (N-linked (GlcNAc...) (keratan sulfate) asparagine).

Belongs to the small leucine-rich proteoglycan (SLRP) family. SLRP class III subfamily. Contains keratan sulfate.

The protein localises to the secreted. The protein resides in the extracellular space. It is found in the extracellular matrix. Induces bone formation in conjunction with TGF-beta-1 or TGF-beta-2. This is Mimecan (OGN) from Pongo abelii (Sumatran orangutan).